Here is an 835-residue protein sequence, read N- to C-terminus: U-box domain-containing protein 35 (835 aa).

Disordered stretches follow at residues 1 to 22, 177 to 303, and 410 to 457; these read MSRSPDKLALPPPPPPPPSRTV, VRPS…SSNR, and EKEK…LEGT. Positions 10–19 are enriched in pro residues; that stretch reads LPPPPPPPPS. Over residues 195-218 the composition is skewed to low complexity; it reads RTNSSSGSSGPTSDSSDVMSSAHD. Residues 269–282 show a composition bias toward polar residues; sequence SSINRSSTDTTSRW. Composition is skewed to basic and acidic residues over residues 285 to 295 and 410 to 455; these read RRRDYEERKEA and EKEK…EKLE. Positions 340 to 459 form a coiled coil; sequence QSYTDNQVNL…EKEKLEGTLG (120 aa). A Protein kinase domain is found at 480 to 745; it reads FSEELKIGMG…DLKDQILPAL (266 aa). Residues 486–494 and lysine 507 contribute to the ATP site; that span reads IGMGAYGAV. Aspartate 602 functions as the Proton acceptor in the catalytic mechanism. One can recognise a U-box domain in the interval 765–835; the sequence is QPPTHFICPL…TAIMEWRSTR (71 aa).

The protein belongs to the protein kinase superfamily. Ser/Thr protein kinase family.

It catalyses the reaction L-seryl-[protein] + ATP = O-phospho-L-seryl-[protein] + ADP + H(+). The enzyme catalyses L-threonyl-[protein] + ATP = O-phospho-L-threonyl-[protein] + ADP + H(+). It carries out the reaction S-ubiquitinyl-[E2 ubiquitin-conjugating enzyme]-L-cysteine + [acceptor protein]-L-lysine = [E2 ubiquitin-conjugating enzyme]-L-cysteine + N(6)-ubiquitinyl-[acceptor protein]-L-lysine.. Its pathway is protein modification; protein ubiquitination. Functions as an E3 ubiquitin ligase. The sequence is that of U-box domain-containing protein 35 (PUB35) from Arabidopsis thaliana (Mouse-ear cress).